The chain runs to 102 residues: Citrate lyase acyl carrier protein (102 aa).

Ser-14 is modified (O-(phosphoribosyl dephospho-coenzyme A)serine).

It belongs to the CitD family. As to quaternary structure, oligomer with a subunit composition of (alpha,beta,gamma)6.

Its subcellular location is the cytoplasm. Functionally, covalent carrier of the coenzyme of citrate lyase. The polypeptide is Citrate lyase acyl carrier protein (Streptococcus equi subsp. zooepidemicus (strain H70)).